The following is a 564-amino-acid chain: MVRVRIRSPSWYDGVDNAPHRVYLRAVGFTEEDFSKPLVGVAVSWSELGPCNYHTLELARYVKEGVKEAGGAALAAPTIVVNDGINMGTPGMRYSLISRELIADSIEAQFNAHGVDAWVGIGGCDKTQPGIIMAMVRLNLPSVYLYGGSAEAGWLGERELTVEDVFEAVGAYYAGRITLEELKRVEELSFPTYGTCQGMFTANTMALLAEAMGVSLLGSATPPATSARRRKFAVESGKAAVRALELGIKPRDVVTYDALYNAAVALFATAGSTNAILHLLAIAHEAGVKFALEDFDKIGKRVPVIAALRPAGPYAMQDLDRVGGVPRLLKKLYKAGLLRGEALTVEGEPIGKLLERWEPPAVPEAGVLYDVDRPYKPHGGIRILWGNLAPRGAVMKIGAAEVLKFEGKALVFDGEAEAFKAVAAGEVKPGHVVVIRYEGPKGAPGMPEMLKVTAAIVGAGLGESVALVTDGRFSGATRGIMVGHVAPEAAAGGPIALVENGDRIVIDGEAGLLKLDVSDEELERRRRQWTPPPPKYKGGLLAKYAALVSQADQGAVTTPETCQC.

C51 contributes to the [2Fe-2S] cluster binding site. D83 serves as a coordination point for Mg(2+). Residue C124 coordinates [2Fe-2S] cluster. Mg(2+) contacts are provided by D125 and K126. K126 carries the N6-carboxylysine modification. A [2Fe-2S] cluster-binding site is contributed by C196. E448 contributes to the Mg(2+) binding site. S474 (proton acceptor) is an active-site residue.

Belongs to the IlvD/Edd family. As to quaternary structure, homodimer. [2Fe-2S] cluster is required as a cofactor. Requires Mg(2+) as cofactor.

The enzyme catalyses (2R)-2,3-dihydroxy-3-methylbutanoate = 3-methyl-2-oxobutanoate + H2O. It catalyses the reaction (2R,3R)-2,3-dihydroxy-3-methylpentanoate = (S)-3-methyl-2-oxopentanoate + H2O. The protein operates within amino-acid biosynthesis; L-isoleucine biosynthesis; L-isoleucine from 2-oxobutanoate: step 3/4. It functions in the pathway amino-acid biosynthesis; L-valine biosynthesis; L-valine from pyruvate: step 3/4. In terms of biological role, functions in the biosynthesis of branched-chain amino acids. Catalyzes the dehydration of (2R,3R)-2,3-dihydroxy-3-methylpentanoate (2,3-dihydroxy-3-methylvalerate) into 2-oxo-3-methylpentanoate (2-oxo-3-methylvalerate) and of (2R)-2,3-dihydroxy-3-methylbutanoate (2,3-dihydroxyisovalerate) into 2-oxo-3-methylbutanoate (2-oxoisovalerate), the penultimate precursor to L-isoleucine and L-valine, respectively. The sequence is that of Dihydroxy-acid dehydratase from Pyrobaculum calidifontis (strain DSM 21063 / JCM 11548 / VA1).